Consider the following 372-residue polypeptide: Adaptive-response sensory kinase SasA (372 aa).

The Histidine kinase domain maps to 147–360 (MVAHELRTPL…CFHFTVPVWQ (214 aa)). His150 is subject to Phosphohistidine; by autocatalysis.

Homooligomerizes. Interacts with KaiC. Participates in the KaiBC complex, whose core is composed of a KaiC homohexamer and 6 KaiB.

It catalyses the reaction ATP + protein L-histidine = ADP + protein N-phospho-L-histidine.. Member of the two-component regulatory system SasA/RpaA involved in genome-wide circadian gene expression. One of several clock output pathways. Participates in the Kai clock protein complex, the main circadian regulator in cyanobacteria, via its interaction with KaiC. KaiC enhances the autophosphorylation activity of SasA, which then transfers its phosphate group to RpaA to activate it. In addition to its output function, recruits fold-shifted KaiB (KaiB(fs)) to KaiC to cooperatively form the KaiB(6):KaiC(6) complex (independent of SasA kinase activity). Required for robustness of the circadian rhythm of gene expression and is involved in clock output, also required for adaptation to light/dark cycles. The protein is Adaptive-response sensory kinase SasA of Prochlorococcus marinus (strain AS9601).